The sequence spans 325 residues: Cln5-like protein 2 (325 aa).

An N-terminal signal peptide occupies residues 1-19 (MNKLIFIIICLGIVDKTIS). N88, N117, N133, N163, N182, N189, N238, and N262 each carry an N-linked (GlcNAc...) asparagine glycan.

It belongs to the CLN5 family.

This chain is Cln5-like protein 2 (cln5lb), found in Dictyostelium discoideum (Social amoeba).